A 176-amino-acid chain; its full sequence is Protein tyrosine phosphatase PRL-1 (176 aa).

The Tyrosine-protein phosphatase domain occupies 13–165 (GESDAVVFRF…YKPRHQEGNE (153 aa)). Cysteines 52 and 107 form a disulfide. Catalysis depends on aspartate 75, which acts as the Proton donor. Catalysis depends on cysteine 107, which acts as the Phosphocysteine intermediate. Substrate is bound at residue 109-113 (AGLGR). Cysteine 173 is modified (cysteine methyl ester). Cysteine 173 carries the S-farnesyl cysteine lipid modification. A propeptide spans 174–176 (AVM) (removed in mature form).

The protein belongs to the protein-tyrosine phosphatase family.

Its subcellular location is the flagellar pocket. It catalyses the reaction O-phospho-L-tyrosyl-[protein] + H2O = L-tyrosyl-[protein] + phosphate. Its activity is regulated as follows. Activated in a reduced environment which promotes the reduction of the disulfide bond between the regulatory Cys-52 and the catalytic Cys-107 residues. Inhibited by sodium orthovanadate. In terms of biological role, has protein tyrosine phosphatase activity. This Trypanosoma cruzi (strain CL Brener) protein is Protein tyrosine phosphatase PRL-1.